A 205-amino-acid polypeptide reads, in one-letter code: Ribosomal RNA large subunit methyltransferase E (205 aa).

5 residues coordinate S-adenosyl-L-methionine: glycine 50, tryptophan 52, aspartate 67, asparagine 83, and aspartate 111. Lysine 151 acts as the Proton acceptor in catalysis.

This sequence belongs to the class I-like SAM-binding methyltransferase superfamily. RNA methyltransferase RlmE family.

The protein resides in the cytoplasm. It carries out the reaction uridine(2552) in 23S rRNA + S-adenosyl-L-methionine = 2'-O-methyluridine(2552) in 23S rRNA + S-adenosyl-L-homocysteine + H(+). In terms of biological role, specifically methylates the uridine in position 2552 of 23S rRNA at the 2'-O position of the ribose in the fully assembled 50S ribosomal subunit. This is Ribosomal RNA large subunit methyltransferase E from Thermoplasma acidophilum (strain ATCC 25905 / DSM 1728 / JCM 9062 / NBRC 15155 / AMRC-C165).